The following is a 147-amino-acid chain: Nucleoside diphosphate kinase (147 aa).

Residues K9, F57, R85, T91, R102, and N112 each contribute to the ATP site. H115 functions as the Pros-phosphohistidine intermediate in the catalytic mechanism.

The protein belongs to the NDK family. Homotetramer. Requires Mg(2+) as cofactor.

The protein localises to the cytoplasm. It catalyses the reaction a 2'-deoxyribonucleoside 5'-diphosphate + ATP = a 2'-deoxyribonucleoside 5'-triphosphate + ADP. The enzyme catalyses a ribonucleoside 5'-diphosphate + ATP = a ribonucleoside 5'-triphosphate + ADP. Functionally, major role in the synthesis of nucleoside triphosphates other than ATP. The ATP gamma phosphate is transferred to the NDP beta phosphate via a ping-pong mechanism, using a phosphorylated active-site intermediate. The polypeptide is Nucleoside diphosphate kinase (Listeria monocytogenes serotype 4b (strain F2365)).